Consider the following 187-residue polypeptide: Elongation factor P (187 aa).

The protein belongs to the elongation factor P family.

Its subcellular location is the cytoplasm. Its pathway is protein biosynthesis; polypeptide chain elongation. In terms of biological role, involved in peptide bond synthesis. Stimulates efficient translation and peptide-bond synthesis on native or reconstituted 70S ribosomes in vitro. Probably functions indirectly by altering the affinity of the ribosome for aminoacyl-tRNA, thus increasing their reactivity as acceptors for peptidyl transferase. This is Elongation factor P from Acidothermus cellulolyticus (strain ATCC 43068 / DSM 8971 / 11B).